Here is a 100-residue protein sequence, read N- to C-terminus: Urease subunit gamma (100 aa).

It belongs to the urease gamma subunit family. Heterotrimer of UreA (gamma), UreB (beta) and UreC (alpha) subunits. Three heterotrimers associate to form the active enzyme.

It localises to the cytoplasm. The catalysed reaction is urea + 2 H2O + H(+) = hydrogencarbonate + 2 NH4(+). It participates in nitrogen metabolism; urea degradation; CO(2) and NH(3) from urea (urease route): step 1/1. In Mycolicibacterium gilvum (strain PYR-GCK) (Mycobacterium gilvum (strain PYR-GCK)), this protein is Urease subunit gamma.